Here is a 338-residue protein sequence, read N- to C-terminus: Anthranilate phosphoribosyltransferase (338 aa).

5-phospho-alpha-D-ribose 1-diphosphate is bound by residues Gly-83, 86–87 (GD), Ser-91, 93–96 (NCST), 111–119 (KHGNRAVSS), and Ala-123. Gly-83 provides a ligand contact to anthranilate. Residue Ser-95 participates in Mg(2+) binding. Asn-114 is an anthranilate binding site. Position 169 (Arg-169) interacts with anthranilate. The Mg(2+) site is built by Asp-228 and Glu-229.

The protein belongs to the anthranilate phosphoribosyltransferase family. In terms of assembly, homodimer. The cofactor is Mg(2+).

It carries out the reaction N-(5-phospho-beta-D-ribosyl)anthranilate + diphosphate = 5-phospho-alpha-D-ribose 1-diphosphate + anthranilate. It participates in amino-acid biosynthesis; L-tryptophan biosynthesis; L-tryptophan from chorismate: step 2/5. Catalyzes the transfer of the phosphoribosyl group of 5-phosphorylribose-1-pyrophosphate (PRPP) to anthranilate to yield N-(5'-phosphoribosyl)-anthranilate (PRA). The protein is Anthranilate phosphoribosyltransferase of Nitratidesulfovibrio vulgaris (strain DSM 19637 / Miyazaki F) (Desulfovibrio vulgaris).